The primary structure comprises 1015 residues: Cytosolic carboxypeptidase 1 (1015 aa).

Positions Leu384–Asn462 are disordered. Over residues Glu416–Ile451 the composition is skewed to acidic residues. The Peptidase M14 domain occupies Tyr727–Thr1013. Zn(2+) is bound by residues His792, Glu795, and His891. Residue Glu977 is the Proton donor/acceptor of the active site.

This sequence belongs to the peptidase M14 family. Zn(2+) serves as cofactor. In hermaphrodites and males, expressed in amphid and IL2 ciliated sensory neurons. In males, expressed in CEM head neurons, RnB and HOB tail neurons, and in gubernacular erector and retractor muscles.

The protein localises to the perikaryon. Its subcellular location is the cell projection. It localises to the cilium. It is found in the dendrite. Functionally, catalyzes the deglutamylation of polyglutamate side chains generated by post-translational polyglutamylation of proteins such as tubulins. Via the deglutamylation of tubulin, regulates the localization and velocity of kinesin motors and the structural integrity of microtubules in sensory cilia. In male CEM sensory neurons, regulates the cilia release of bioactive extracellular vesicles. Also regulates microtubule dynamics in uterine muscle cells. The protein is Cytosolic carboxypeptidase 1 of Caenorhabditis elegans.